Consider the following 309-residue polypeptide: Serine/threonine-protein phosphatase 2A catalytic subunit alpha isoform (309 aa).

Residues Asp-57, His-59, Asp-85, and Asn-117 each contribute to the Mn(2+) site. Zn(2+) contacts are provided by Asp-57, His-59, and Asp-85. Residues Asp-85 and Asn-117 each contribute to the Fe(3+) site. His-118 acts as the Proton donor in catalysis. 2 residues coordinate Mn(2+): His-167 and His-241. His-167 and His-241 together coordinate Fe(3+). The residue at position 307 (Tyr-307) is a Phosphotyrosine. Position 309 is a leucine methyl ester (Leu-309).

This sequence belongs to the PPP phosphatase family. PP-1 subfamily. In terms of assembly, PP2A consists of a common heterodimeric core enzyme composed of PPP2CA, a 36 kDa catalytic subunit (subunit C), and PPP2R1A, a 65 kDa constant regulatory subunit (PR65 or subunit A), that associates with a variety of regulatory subunits. Proteins that associate with the core dimer include three families of regulatory subunits B (the R2/B/PR55/B55, R3/B''/PR72/PR130/PR59 and R5/B'/B56 families), the 48 kDa variable regulatory subunit, viral proteins, and cell signaling molecules. Interacts with the PP2A A subunit PPP2R1A. Interacts with the regulatory subunit PPP2R2A. Interacts (via C-terminus) with PTPA. Interacts with NXN; the interaction is direct. Interacts with KCTD20. Interacts with BTBD10. Interacts with SGO1 and SGO2. Interacts with RAF1. Interaction with IGBP1 protects unassembled PPP2CA from degradative ubiquitination. Interacts with GSK3B (via C2 domain). Interacts with MFHAS1; retains PPP2CA into the cytoplasm and excludes it from the nucleus. Interacts with PABIR1/FAM122A. Interacts with ADCY8; interaction is phosphatase activity-dependent; antagonizes interaction between ADCY8 and calmodulin. Interacts with CRTC3 (when phosphorylated at 'Ser-391'). Interacts with SPRY2; the interaction is inhibited by TESK1 interaction with SPRY2, possibly by vesicular sequestration of SPRY2. Interacts with TRAF3IP3. Interacts with AMBRA1 (via PxP motifs); enhancing interaction between PPP2CA and MYC or FOXO3. Forms a complex with AMBRA1 and BECN1; AMBRA1 and BECN1 components of the complex regulate MYC stability via different pathways. Part of the core of STRIPAK complexes composed of PP2A catalytic and scaffolding subunits, the striatins (PP2A regulatory subunits), the striatin-associated proteins MOB4, STRIP1 and STRIP2, PDCD10 and members of the STE20 kinases, such as STK24 and STK26. Phosphatase component of the Integrator-PP2A (INTAC) complex, composed of the Integrator core complex and protein phosphatase 2A subunits PPP2CA and PPP2R1A. Mn(2+) is required as a cofactor. Requires Fe(3+) as cofactor. It depends on Zn(2+) as a cofactor. In terms of processing, reversibly methyl esterified on Leu-309 by leucine carboxyl methyltransferase 1 (Lcmt1) and protein phosphatase methylesterase 1 (Ppme1). Carboxyl methylation influences the affinity of the catalytic subunit for the different regulatory subunits, thereby modulating the PP2A holoenzyme's substrate specificity, enzyme activity and cellular localization. Phosphorylation of either threonine (by autophosphorylation-activated protein kinase) or tyrosine results in inactivation of the phosphatase. Auto-dephosphorylation has been suggested as a mechanism for reactivation. Post-translationally, polyubiquitinated, leading to its degradation by the proteasome.

Its subcellular location is the cytoplasm. The protein resides in the nucleus. It is found in the chromosome. It localises to the centromere. The protein localises to the cytoskeleton. Its subcellular location is the spindle pole. The catalysed reaction is O-phospho-L-seryl-[protein] + H2O = L-seryl-[protein] + phosphate. The enzyme catalyses O-phospho-L-threonyl-[protein] + H2O = L-threonyl-[protein] + phosphate. Its activity is regulated as follows. Inhibited by the interaction between PPP2R2A and ARPP19; this inhibition is enhanced when ARPP19 is phosphorylated. Inhibited by the interaction between PPP2R2A and PABIR1/FAM122A. Its function is as follows. Catalytic subunit of protein phosphatase 2A (PP2A), a serine/threonine phosphatase involved in the regulation of a wide variety of enzymes, signal transduction pathways, and cellular events. PP2A is the major phosphatase for microtubule-associated proteins (MAPs). PP2A can modulate the activity of phosphorylase B kinase casein kinase 2, mitogen-stimulated S6 kinase, and MAP-2 kinase. Cooperates with SGO2 to protect centromeric cohesin from separase-mediated cleavage in oocytes specifically during meiosis I. Can dephosphorylate various proteins, such as AXIN1, p53/TP53, PIM3, WEE1. Activates RAF1 by dephosphorylating it at 'Ser-259'. Mediates dephosphorylation of WEE1, preventing its ubiquitin-mediated proteolysis, increasing WEE1 protein levels, and promoting the G2/M checkpoint. Mediates dephosphorylation of MYC; promoting its ubiquitin-mediated proteolysis: interaction with AMBRA1 enhances interaction between PPP2CA and MYC. Mediates dephosphorylation of FOXO3; promoting its stabilization: interaction with AMBRA1 enhances interaction between PPP2CA and FOXO3. Catalyzes dephosphorylation of the pyrin domain of NLRP3, promoting assembly of the NLRP3 inflammasome. Together with RACK1 adapter, mediates dephosphorylation of AKT1 at 'Ser-473', preventing AKT1 activation and AKT-mTOR signaling pathway. Dephosphorylation of AKT1 is essential for regulatory T-cells (Treg) homeostasis and stability. Catalyzes dephosphorylation of PIM3, promotinh PIM3 ubiquitination and proteasomal degradation. Part of the striatin-interacting phosphatase and kinase (STRIPAK) complexes. STRIPAK complexes have critical roles in protein (de)phosphorylation and are regulators of multiple signaling pathways including Hippo, MAPK, nuclear receptor and cytoskeleton remodeling. Different types of STRIPAK complexes are involved in a variety of biological processes such as cell growth, differentiation, apoptosis, metabolism and immune regulation. Key mediator of a quality checkpoint during transcription elongation as part of the Integrator-PP2A (INTAC) complex. The INTAC complex drives premature transcription termination of transcripts that are unfavorably configured for transcriptional elongation: within the INTAC complex, PPP2CA catalyzes dephosphorylation of the C-terminal domain (CTD) of Pol II subunit POLR2A/RPB1 and SUPT5H/SPT5, thereby preventing transcriptional elongation. The polypeptide is Serine/threonine-protein phosphatase 2A catalytic subunit alpha isoform (Ppp2ca) (Rattus norvegicus (Rat)).